A 386-amino-acid polypeptide reads, in one-letter code: Diaminopimelate decarboxylase (386 aa).

Position 49 is an N6-(pyridoxal phosphate)lysine (K49). Residues G228 and 266–269 (ELGR) contribute to the pyridoxal 5'-phosphate site. Residues R269, R305, Y309, E335, and Y363 each coordinate substrate. Y363 lines the pyridoxal 5'-phosphate pocket.

Belongs to the Orn/Lys/Arg decarboxylase class-II family. LysA subfamily. As to quaternary structure, homodimer. The cofactor is pyridoxal 5'-phosphate.

It catalyses the reaction meso-2,6-diaminopimelate + H(+) = L-lysine + CO2. It participates in amino-acid biosynthesis; L-lysine biosynthesis via DAP pathway; L-lysine from DL-2,6-diaminopimelate: step 1/1. In terms of biological role, specifically catalyzes the decarboxylation of meso-diaminopimelate (meso-DAP) to L-lysine. In Bacteroides thetaiotaomicron (strain ATCC 29148 / DSM 2079 / JCM 5827 / CCUG 10774 / NCTC 10582 / VPI-5482 / E50), this protein is Diaminopimelate decarboxylase.